A 264-amino-acid polypeptide reads, in one-letter code: Small ribosomal subunit protein uS2 (264 aa).

The interval 225–264 (GKKAREERQLAAAKDAAGDAKPEAEEAPVAAEAEEAPAAE) is disordered.

It belongs to the universal ribosomal protein uS2 family.

The protein is Small ribosomal subunit protein uS2 of Corynebacterium glutamicum (strain R).